We begin with the raw amino-acid sequence, 338 residues long: Ketol-acid reductoisomerase (NADP(+)) (338 aa).

One can recognise a KARI N-terminal Rossmann domain in the interval 1–181; that stretch reads MKVFYDKDCD…GGGKGGIIET (181 aa). Residues 24-27, Arg-47, and Ser-52 each bind NADP(+); that span reads YGSQ. Residue His-107 is part of the active site. Gly-133 is an NADP(+) binding site. The KARI C-terminal knotted domain maps to 182–327; it reads NFKEETETDL…GQLRAMMPWI (146 aa). The Mg(2+) site is built by Asp-190, Glu-194, Glu-226, and Glu-230. Ser-251 serves as a coordination point for substrate.

Belongs to the ketol-acid reductoisomerase family. It depends on Mg(2+) as a cofactor.

It carries out the reaction (2R)-2,3-dihydroxy-3-methylbutanoate + NADP(+) = (2S)-2-acetolactate + NADPH + H(+). The catalysed reaction is (2R,3R)-2,3-dihydroxy-3-methylpentanoate + NADP(+) = (S)-2-ethyl-2-hydroxy-3-oxobutanoate + NADPH + H(+). Its pathway is amino-acid biosynthesis; L-isoleucine biosynthesis; L-isoleucine from 2-oxobutanoate: step 2/4. It participates in amino-acid biosynthesis; L-valine biosynthesis; L-valine from pyruvate: step 2/4. Functionally, involved in the biosynthesis of branched-chain amino acids (BCAA). Catalyzes an alkyl-migration followed by a ketol-acid reduction of (S)-2-acetolactate (S2AL) to yield (R)-2,3-dihydroxy-isovalerate. In the isomerase reaction, S2AL is rearranged via a Mg-dependent methyl migration to produce 3-hydroxy-3-methyl-2-ketobutyrate (HMKB). In the reductase reaction, this 2-ketoacid undergoes a metal-dependent reduction by NADPH to yield (R)-2,3-dihydroxy-isovalerate. The polypeptide is Ketol-acid reductoisomerase (NADP(+)) (Delftia acidovorans (strain DSM 14801 / SPH-1)).